The chain runs to 244 residues: uncharacterized protein (244 aa).

A compositionally biased stretch (basic residues) spans 1 to 11 (MSRRSRSRSRS). Disordered regions lie at residues 1–104 (MSRR…TLNE) and 213–244 (ARQKSDMKKNEQQAILNKSGNSRAPIKFKFGK). The span at 12 to 31 (PKRDREERKRREDRDRDRER) shows a compositional bias: basic and acidic residues. Residues 32-46 (KRDRKDRERKRRHRS) show a composition bias toward basic residues. Positions 63–75 (FREERRRRERNES) are enriched in basic and acidic residues. Pro residues predominate over residues 77–89 (KLPPPPPPPPSDP). Residues 213–223 (ARQKSDMKKNE) are compositionally biased toward basic and acidic residues. Residues 224–234 (QQAILNKSGNS) show a composition bias toward polar residues.

This is an uncharacterized protein from Caenorhabditis elegans.